We begin with the raw amino-acid sequence, 336 residues long: Antigen-presenting glycoprotein CD1d1 (336 aa).

The first 21 residues, 1–21, serve as a signal peptide directing secretion; it reads MRYLPWLLLWAFLQVWGQSEA. The Extracellular portion of the chain corresponds to 22–305; that stretch reads QQKNYTFRCL…YWDARQAPVG (284 aa). Asn-25, Asn-38, and Asn-60 each carry an N-linked (GlcNAc...) asparagine glycan. Asp-98 contributes to the a D-galactosylceramide binding site. Disulfide bonds link Cys-122–Cys-186 and Cys-226–Cys-281. Asn-128 carries an N-linked (GlcNAc...) asparagine glycan. 171 to 174 serves as a coordination point for a D-galactosylceramide; that stretch reads DQGT. Asn-183 carries an N-linked (GlcNAc...) asparagine glycan. The 91-residue stretch at 207 to 297 folds into the Ig-like domain; the sequence is PVAWLSSVPS…LGGQDIILYW (91 aa). The helical transmembrane segment at 306-326 threads the bilayer; it reads LIVFIVLIMLVVVGAVVYYIW. At 327-336 the chain is on the cytoplasmic side; sequence RRRSAYQDIR. The short motif at 332–335 is the Internalization signal element; the sequence is YQDI.

In terms of assembly, heterodimer with B2M (beta-2-microglobulin). Interacts with MHC II and CD74. N-glycosylated. As to expression, expressed on cortical thymocytes, on certain T-cell leukemias, and in various other tissues.

It localises to the cell membrane. Its subcellular location is the endosome membrane. It is found in the lysosome membrane. Antigen-presenting protein that binds self and non-self glycolipids and presents them to T-cell receptors on natural killer T-cells. The chain is Antigen-presenting glycoprotein CD1d1 (Cd1d1) from Mus musculus (Mouse).